Reading from the N-terminus, the 21-residue chain is Hydroxypicolinic acid-activating enzyme (21 aa).

Functionally, involved in etamycin biosynthesis. This Streptomyces griseoviridis protein is Hydroxypicolinic acid-activating enzyme.